Reading from the N-terminus, the 380-residue chain is Apelin receptor (380 aa).

Topologically, residues 1–30 (MEEGGDFDNYYGADNQSECEYTDWKSSGAL) are extracellular. N-linked (GlcNAc...) asparagine glycosylation is present at N15. Intrachain disulfides connect C19–C281 and C102–C181. Residues 31 to 54 (IPAIYMLVFLLGTTGNGLVLWTVF) traverse the membrane as a helical segment. Residues 55–64 (RSSREKRRSA) are Cytoplasmic-facing. A helical membrane pass occupies residues 65-86 (DIFIASLAVADLTFVVTLPLWA). Residues 87–99 (TYTYRDYDWPFGT) are Extracellular-facing. A helical transmembrane segment spans residues 100–125 (FSCKLSSYLIFVNMYASVFCLTGLSF). At 126–146 (DRYLAIVRPVANARLRLRVSG) the chain is on the cytoplasmic side. The helical transmembrane segment at 147-164 (AVATAVLWVLAALLAMPV) threads the bilayer. The Extracellular segment spans residues 165 to 198 (MVFRTTGDLENTTKVQCYMDYSMVATVSSDWAWE). N175 carries N-linked (GlcNAc...) asparagine glycosylation. Residues 199–223 (VGLGVSSTTVGFVVPFTIMLTCYFF) traverse the membrane as a helical segment. Residues 224 to 246 (IAQTIAGHFRKERIEGLRKRRRL) are Cytoplasmic-facing. The chain crosses the membrane as a helical span at residues 247-270 (LSIIVVLVVTFALCWMPYHLVKTL). Over 271–289 (YMLGSLLHWPCDFDLFLMN) the chain is Extracellular. The chain crosses the membrane as a helical span at residues 290–312 (VFPYCTCISYVNSCLNPFLYAFF). The Cytoplasmic portion of the chain corresponds to 313–380 (DPRFRQACTS…PYSQETLVVD (68 aa)). A compositionally biased stretch (low complexity) spans 342–351 (KSASYSSGHS). Residues 342–380 (KSASYSSGHSQGPGPNMGKGGEQMHEKSIPYSQETLVVD) form a disordered region. A compositionally biased stretch (polar residues) spans 371-380 (PYSQETLVVD).

This sequence belongs to the G-protein coupled receptor 1 family. As to quaternary structure, homodimer; dimerization inhibits APLNR-mediated G protein and beta-arrestin signaling pathways compared to monomeric APLNR.

Its subcellular location is the cell membrane. In terms of biological role, g protein-coupled receptor for peptide hormones apelin (APLN) and apelin receptor early endogenous ligand (APELA/ELA), that plays a role in the regulation of normal cardiovascular function and fluid homeostasis. When acting as apelin receptor, activates both G(i) protein pathway that inhibits adenylate cyclase activity, and the beta-arrestin pathway that promotes internalization of the receptor. APLNR/APJ also functions as mechanoreceptor that is activated by pathological stimuli in a G-protein-independent fashion to induce beta-arrestin signaling, hence eliciting cardiac hypertrophy. However, the presence of apelin ligand blunts cardiac hypertrophic induction from APLNR/APJ on response to pathological stimuli. Plays a key role in early development such as gastrulation, blood vessels formation and heart morphogenesis by acting as a APELA receptor. May promote angioblast migration toward the embryonic midline, i.e. the position of the future vessel formation, during vasculogenesis. Promotes sinus venosus (SV)-derived endothelial cells migration into the developing heart to promote coronary blood vessel development. Also plays a role in various processes in adults such as regulation of blood vessel formation, blood pressure, heart contractility and heart failure. Its function is as follows. (Microbial infection) Alternative coreceptor with CD4 for HIV-1 infection; may be involved in the development of AIDS dementia. The sequence is that of Apelin receptor (APLNR) from Macaca mulatta (Rhesus macaque).